A 150-amino-acid polypeptide reads, in one-letter code: Large ribosomal subunit protein bL9 (150 aa).

Belongs to the bacterial ribosomal protein bL9 family.

In terms of biological role, binds to the 23S rRNA. This Shewanella loihica (strain ATCC BAA-1088 / PV-4) protein is Large ribosomal subunit protein bL9.